The primary structure comprises 113 residues: Small ribosomal subunit protein bS16 (113 aa).

The tract at residues 84–113 (PKPAYTEQPKKSAPKKRAQERAAAAAAAAA) is disordered.

The protein belongs to the bacterial ribosomal protein bS16 family.

The polypeptide is Small ribosomal subunit protein bS16 (Gluconacetobacter diazotrophicus (strain ATCC 49037 / DSM 5601 / CCUG 37298 / CIP 103539 / LMG 7603 / PAl5)).